Consider the following 319-residue polypeptide: MVVVVDTVSDKPIRPRHPEKAARPDALSPKKPDWIRVRAPTSRGYADTRAIVKENGLHTVCEEAGCPNIGECWDRKHATFMIMGDTCTRACAFCNVKTGMPAALDGAEPANVAEATAKLGLAHLVITSVDRDDLADGGAAHIAATIRAVRERCPSTTIEVLTPDFLRKDGALEIVVAAKPDVFNHNLETVPARYLEVRPGARYFHSIRLLQRAKEIDPTLFTKSGIMLGLGEQRSEVLQVMDDLRSADVDFLTIGQYLQPTLKHHAVMSYIPPEEFSSYESLAYAKGFLMVSSSPMTRSSHHAGADFAKLQAARAALPR.

The interval 1-29 (MVVVVDTVSDKPIRPRHPEKAARPDALSP) is disordered. The segment covering 8-29 (VSDKPIRPRHPEKAARPDALSP) has biased composition (basic and acidic residues). Residues Cys61, Cys66, Cys72, Cys87, Cys91, Cys94, and Ser300 each coordinate [4Fe-4S] cluster. Positions 73–289 (WDRKHATFMI…ESLAYAKGFL (217 aa)) constitute a Radical SAM core domain.

This sequence belongs to the radical SAM superfamily. Lipoyl synthase family. [4Fe-4S] cluster serves as cofactor.

It is found in the cytoplasm. It carries out the reaction [[Fe-S] cluster scaffold protein carrying a second [4Fe-4S](2+) cluster] + N(6)-octanoyl-L-lysyl-[protein] + 2 oxidized [2Fe-2S]-[ferredoxin] + 2 S-adenosyl-L-methionine + 4 H(+) = [[Fe-S] cluster scaffold protein] + N(6)-[(R)-dihydrolipoyl]-L-lysyl-[protein] + 4 Fe(3+) + 2 hydrogen sulfide + 2 5'-deoxyadenosine + 2 L-methionine + 2 reduced [2Fe-2S]-[ferredoxin]. Its pathway is protein modification; protein lipoylation via endogenous pathway; protein N(6)-(lipoyl)lysine from octanoyl-[acyl-carrier-protein]: step 2/2. Catalyzes the radical-mediated insertion of two sulfur atoms into the C-6 and C-8 positions of the octanoyl moiety bound to the lipoyl domains of lipoate-dependent enzymes, thereby converting the octanoylated domains into lipoylated derivatives. The polypeptide is Lipoyl synthase (Rhodopseudomonas palustris (strain BisA53)).